We begin with the raw amino-acid sequence, 534 residues long: Bifunctional purine biosynthesis protein PurH (534 aa).

An MGS-like domain is found at 1 to 148 (MNTVRPIRRA…KNHQDVTIVV (148 aa)).

Belongs to the PurH family.

It carries out the reaction (6R)-10-formyltetrahydrofolate + 5-amino-1-(5-phospho-beta-D-ribosyl)imidazole-4-carboxamide = 5-formamido-1-(5-phospho-D-ribosyl)imidazole-4-carboxamide + (6S)-5,6,7,8-tetrahydrofolate. The catalysed reaction is IMP + H2O = 5-formamido-1-(5-phospho-D-ribosyl)imidazole-4-carboxamide. It participates in purine metabolism; IMP biosynthesis via de novo pathway; 5-formamido-1-(5-phospho-D-ribosyl)imidazole-4-carboxamide from 5-amino-1-(5-phospho-D-ribosyl)imidazole-4-carboxamide (10-formyl THF route): step 1/1. The protein operates within purine metabolism; IMP biosynthesis via de novo pathway; IMP from 5-formamido-1-(5-phospho-D-ribosyl)imidazole-4-carboxamide: step 1/1. The polypeptide is Bifunctional purine biosynthesis protein PurH (Shewanella denitrificans (strain OS217 / ATCC BAA-1090 / DSM 15013)).